A 264-amino-acid polypeptide reads, in one-letter code: Small ribosomal subunit protein uS2 (264 aa).

Residues 228–264 (QLDAEDDYEDYDGSEYDDDYEETEYTDAVIPDEETEE) are disordered. Positions 230-264 (DAEDDYEDYDGSEYDDDYEETEYTDAVIPDEETEE) are enriched in acidic residues.

Belongs to the universal ribosomal protein uS2 family.

The protein is Small ribosomal subunit protein uS2 of Nostoc punctiforme (strain ATCC 29133 / PCC 73102).